The chain runs to 218 residues: Adenylate kinase (218 aa).

10–15 (GAGKGT) is a binding site for ATP. The tract at residues 30-59 (STGDMLRAAVKAGTPLGLEAKKVMDAGGLV) is NMP. AMP-binding positions include Thr-31, Arg-36, 57-59 (GLV), 85-88 (GFPR), and Gln-92. The LID stretch occupies residues 122–159 (GRRVHVASGRTYHVKFNPPKVAGKDDETGEDLIQRADD). Residues Arg-123 and 132 to 133 (TY) each bind ATP. Arg-156 and Arg-167 together coordinate AMP. ATP is bound at residue Gly-203.

The protein belongs to the adenylate kinase family. Monomer.

Its subcellular location is the cytoplasm. The catalysed reaction is AMP + ATP = 2 ADP. It functions in the pathway purine metabolism; AMP biosynthesis via salvage pathway; AMP from ADP: step 1/1. Its function is as follows. Catalyzes the reversible transfer of the terminal phosphate group between ATP and AMP. Plays an important role in cellular energy homeostasis and in adenine nucleotide metabolism. In Laribacter hongkongensis (strain HLHK9), this protein is Adenylate kinase.